The following is a 479-amino-acid chain: RAC-gamma serine/threonine-protein kinase (479 aa).

At Ser-2 the chain carries N-acetylserine. One can recognise a PH domain in the interval 5 to 107 (TIVKEGWVQK…WTEAIQAVAD (103 aa)). Cys-59 and Cys-76 form a disulfide bridge. The Protein kinase domain occupies 148-405 (FDYLKLLGKG…AKEIMRHSFF (258 aa)). ATP is bound by residues 154–162 (LGKGTFGKV) and Lys-177. Asp-271 functions as the Proton acceptor in the catalytic mechanism. Residues Cys-293 and Cys-307 are joined by a disulfide bond. Thr-302 is a glycosylation site (O-linked (GlcNAc) threonine). Position 305 is a phosphothreonine; by PDPK1 (Thr-305). Residue Thr-309 is glycosylated (O-linked (GlcNAc) threonine). Residues 406–479 (SGVNWQDVYD…QFSYSASGRE (74 aa)) form the AGC-kinase C-terminal domain. Residue Thr-447 is modified to Phosphothreonine. The disordered stretch occupies residues 458–479 (DCMDNERRPHFPQFSYSASGRE). Ser-472 is subject to Phosphoserine; by PKC/PRKCZ. A glycan (O-linked (GlcNAc) serine; alternate) is linked at Ser-472.

It belongs to the protein kinase superfamily. AGC Ser/Thr protein kinase family. RAC subfamily. Interacts (via PH domain) with TCL1A; this enhances AKT3 phosphorylation and activation. Interacts with TRAF6. Interacts with KCTD20. Interacts with BTBD10. Phosphorylation on Thr-305 and Ser-472 is required for full activity. Phosphorylation of the activation loop at Thr-305 by PDPK1/PDK1 is a prerequisite for full activation. Phosphorylation at Ser-472 by mTORC2 in response to growth factors plays a key role in AKT1 activation by facilitating subsequent phosphorylation of the activation loop by PDPK1/PDK1. In terms of processing, ubiquitinated. When fully phosphorylated and translocated into the nucleus, undergoes 'Lys-48'-polyubiquitination catalyzed by TTC3, leading to its degradation by the proteasome. Post-translationally, O-GlcNAcylation at Thr-302 and Thr-309 inhibits activating phosphorylation at Thr-305 via disrupting the interaction between AKT and PDPK1/PDK1. As to expression, in adult tissues, it is highly expressed in brain, lung and kidney, but weakly in heart, testis and liver. In fetal tissues, it is highly expressed in heart, liver and brain and not at all in kidney.

It localises to the nucleus. Its subcellular location is the cytoplasm. The protein resides in the membrane. The catalysed reaction is L-seryl-[protein] + ATP = O-phospho-L-seryl-[protein] + ADP + H(+). It carries out the reaction L-threonyl-[protein] + ATP = O-phospho-L-threonyl-[protein] + ADP + H(+). With respect to regulation, two specific sites, one in the kinase domain (Thr-305) and the other in the C-terminal regulatory region (Ser-472), need to be phosphorylated for its full activation. IGF-1 leads to the activation of AKT3, which may play a role in regulating cell survival. Its function is as follows. AKT3 is one of 3 closely related serine/threonine-protein kinases (AKT1, AKT2 and AKT3) called the AKT kinase, and which regulate many processes including metabolism, proliferation, cell survival, growth and angiogenesis. This is mediated through serine and/or threonine phosphorylation of a range of downstream substrates. Over 100 substrate candidates have been reported so far, but for most of them, no isoform specificity has been reported. AKT3 is the least studied AKT isoform. It plays an important role in brain development and is crucial for the viability of malignant glioma cells. AKT3 isoform may also be the key molecule in up-regulation and down-regulation of MMP13 via IL13. Required for the coordination of mitochondrial biogenesis with growth factor-induced increases in cellular energy demands. Down-regulation by RNA interference reduces the expression of the phosphorylated form of BAD, resulting in the induction of caspase-dependent apoptosis. The sequence is that of RAC-gamma serine/threonine-protein kinase (AKT3) from Homo sapiens (Human).